Here is a 336-residue protein sequence, read N- to C-terminus: Holliday junction branch migration complex subunit RuvB (336 aa).

The tract at residues 1-183 (MATERLVAGN…FGINSRLEFY (183 aa)) is large ATPase domain (RuvB-L). ATP is bound by residues L22, R23, G64, K67, T68, T69, 130-132 (EDF), R173, Y183, and R220. Residue T68 participates in Mg(2+) binding. A small ATPAse domain (RuvB-S) region spans residues 184–254 (QVAELEEIIR…VAREALELLQ (71 aa)). The head domain (RuvB-H) stretch occupies residues 257–336 (AAGLDSSDRR…LGIKPEDRLF (80 aa)). Positions 312 and 317 each coordinate DNA.

The protein belongs to the RuvB family. In terms of assembly, homohexamer. Forms an RuvA(8)-RuvB(12)-Holliday junction (HJ) complex. HJ DNA is sandwiched between 2 RuvA tetramers; dsDNA enters through RuvA and exits via RuvB. An RuvB hexamer assembles on each DNA strand where it exits the tetramer. Each RuvB hexamer is contacted by two RuvA subunits (via domain III) on 2 adjacent RuvB subunits; this complex drives branch migration. In the full resolvosome a probable DNA-RuvA(4)-RuvB(12)-RuvC(2) complex forms which resolves the HJ.

Its subcellular location is the cytoplasm. It catalyses the reaction ATP + H2O = ADP + phosphate + H(+). Functionally, the RuvA-RuvB-RuvC complex processes Holliday junction (HJ) DNA during genetic recombination and DNA repair, while the RuvA-RuvB complex plays an important role in the rescue of blocked DNA replication forks via replication fork reversal (RFR). RuvA specifically binds to HJ cruciform DNA, conferring on it an open structure. The RuvB hexamer acts as an ATP-dependent pump, pulling dsDNA into and through the RuvAB complex. RuvB forms 2 homohexamers on either side of HJ DNA bound by 1 or 2 RuvA tetramers; 4 subunits per hexamer contact DNA at a time. Coordinated motions by a converter formed by DNA-disengaged RuvB subunits stimulates ATP hydrolysis and nucleotide exchange. Immobilization of the converter enables RuvB to convert the ATP-contained energy into a lever motion, pulling 2 nucleotides of DNA out of the RuvA tetramer per ATP hydrolyzed, thus driving DNA branch migration. The RuvB motors rotate together with the DNA substrate, which together with the progressing nucleotide cycle form the mechanistic basis for DNA recombination by continuous HJ branch migration. Branch migration allows RuvC to scan DNA until it finds its consensus sequence, where it cleaves and resolves cruciform DNA. In Moorella thermoacetica (strain ATCC 39073 / JCM 9320), this protein is Holliday junction branch migration complex subunit RuvB.